A 424-amino-acid polypeptide reads, in one-letter code: Protein pellino (424 aa).

A disordered region spans residues 1–21; the sequence is MVKRTDGTESPILAEDGGDGH. Ser10 carries the post-translational modification Phosphoserine.

This sequence belongs to the pellino family. Interacts with pll.

Scaffold protein involved in the Toll signaling pathway via its interaction with pelle/pll kinase. In Drosophila melanogaster (Fruit fly), this protein is Protein pellino (Pli).